A 639-amino-acid polypeptide reads, in one-letter code: MSDRPSTPLLDNVQSPNDLKGLSDFDLKRLADELRAEMIWTVSKTGGHFGAGLGVVELTVALHSVFDTPRDKLVWDVSHQCYPHKILTGRRDQMLTIRQKDGLSGFTKRSESPFDPFGAAHSSTSISAALGFAVARDLGGDSDTGHGDAIAVIGDGAMSGGMAFEAMNNAGHLGKRLIVILNDNEMSIAPPTGALSSYLSRLYAGAPFQEFKAAAKGAVSLLPEPFQEGARRAKELLKSATVGGTLFEELGFSYVGPIDGHDMESLLSVLRTVKARADGPILIHAITKKGKGYSEHRADRGHATAKFNIATGEQVKAPSNAPSYTKVFAQSLIAEAEDDPKVVAVTAAMPDGTGLDLFAERFPSRCFDVGIAEQHGVTFAAGMAAGGLKPFAAIYSTFLQRGYDQVVHDVAIQRLPVRFAIDRAGLVGADGCTHAGSYDISYLANLPGFVVMAAADEAELRHMVRTALEIDDRPSAFRFPRGEGMGVDMPDRGTALEIGKGRMISEGNRVAILNFGTRLKEVQEAAETLSQRGITPTIADARFAKPLDEALILQLARHHEALITVEEGAVGGFGSHVAHLLAENAVFDTGIKYRSMVLPDIFIDQASPKDMYAVAGMNAEDIVAKVLTTLGVEVLSQRA.

Residues His-79 and 120 to 122 (AHS) contribute to the thiamine diphosphate site. Asp-155 provides a ligand contact to Mg(2+). Residues 156–157 (GA), Asn-184, Tyr-293, and Glu-373 each bind thiamine diphosphate. Asn-184 is a binding site for Mg(2+).

This sequence belongs to the transketolase family. DXPS subfamily. Homodimer. Mg(2+) is required as a cofactor. It depends on thiamine diphosphate as a cofactor.

The catalysed reaction is D-glyceraldehyde 3-phosphate + pyruvate + H(+) = 1-deoxy-D-xylulose 5-phosphate + CO2. Its pathway is metabolic intermediate biosynthesis; 1-deoxy-D-xylulose 5-phosphate biosynthesis; 1-deoxy-D-xylulose 5-phosphate from D-glyceraldehyde 3-phosphate and pyruvate: step 1/1. In terms of biological role, catalyzes the acyloin condensation reaction between C atoms 2 and 3 of pyruvate and glyceraldehyde 3-phosphate to yield 1-deoxy-D-xylulose-5-phosphate (DXP). This chain is 1-deoxy-D-xylulose-5-phosphate synthase 1, found in Jannaschia sp. (strain CCS1).